The chain runs to 430 residues: Probable glucose-6-phosphate isomerase (430 aa).

Glutamate 271 (proton donor) is an active-site residue. Catalysis depends on residues histidine 292, histidine 303, and lysine 403.

Belongs to the GPI family.

It is found in the cytoplasm. It catalyses the reaction alpha-D-glucose 6-phosphate = beta-D-fructose 6-phosphate. The protein operates within carbohydrate biosynthesis; gluconeogenesis. It participates in carbohydrate degradation; glycolysis; D-glyceraldehyde 3-phosphate and glycerone phosphate from D-glucose: step 2/4. Catalyzes the reversible isomerization of glucose-6-phosphate to fructose-6-phosphate. This Haloquadratum walsbyi (strain DSM 16790 / HBSQ001) protein is Probable glucose-6-phosphate isomerase.